The chain runs to 407 residues: Imidazolonepropionase (407 aa).

The Fe(3+) site is built by His-74 and His-76. The Zn(2+) site is built by His-74 and His-76. Residues Arg-83, Tyr-146, and His-179 each contribute to the 4-imidazolone-5-propanoate site. Residue Tyr-146 participates in N-formimidoyl-L-glutamate binding. His-244 serves as a coordination point for Fe(3+). Residue His-244 coordinates Zn(2+). Gln-247 is a binding site for 4-imidazolone-5-propanoate. Residue Asp-319 participates in Fe(3+) binding. Asp-319 is a Zn(2+) binding site. Residues Asn-321 and Gly-323 each coordinate N-formimidoyl-L-glutamate. Thr-324 is a binding site for 4-imidazolone-5-propanoate.

The protein belongs to the metallo-dependent hydrolases superfamily. HutI family. The cofactor is Zn(2+). It depends on Fe(3+) as a cofactor.

Its subcellular location is the cytoplasm. The enzyme catalyses 4-imidazolone-5-propanoate + H2O = N-formimidoyl-L-glutamate. The protein operates within amino-acid degradation; L-histidine degradation into L-glutamate; N-formimidoyl-L-glutamate from L-histidine: step 3/3. In terms of biological role, catalyzes the hydrolytic cleavage of the carbon-nitrogen bond in imidazolone-5-propanoate to yield N-formimidoyl-L-glutamate. It is the third step in the universal histidine degradation pathway. In Salmonella heidelberg (strain SL476), this protein is Imidazolonepropionase.